The chain runs to 384 residues: Ferrochelatase, mitochondrial (384 aa).

C156 contributes to the [2Fe-2S] cluster binding site. Catalysis depends on residues H190 and N343. The [2Fe-2S] cluster site is built by C363, C366, and C371.

The protein belongs to the ferrochelatase family. As to quaternary structure, homodimer. Homotetramer. Requires [2Fe-2S] cluster as cofactor.

It is found in the mitochondrion inner membrane. The catalysed reaction is heme b + 2 H(+) = protoporphyrin IX + Fe(2+). It functions in the pathway porphyrin-containing compound metabolism; protoheme biosynthesis; protoheme from protoporphyrin-IX: step 1/1. In terms of biological role, catalyzes the ferrous insertion into protoporphyrin IX. Terminal enzyme in heme biosynthesis. Contains four conserved cysteines that function as cluster ligands and play a crucial role in maintaining protein structure. The sequence is that of Ferrochelatase, mitochondrial from Drosophila melanogaster (Fruit fly).